The primary structure comprises 248 residues: 5'-nucleotidase SurE (248 aa).

A divalent metal cation contacts are provided by D8, D9, S39, and N91.

The protein belongs to the SurE nucleotidase family. The cofactor is a divalent metal cation.

It localises to the cytoplasm. The enzyme catalyses a ribonucleoside 5'-phosphate + H2O = a ribonucleoside + phosphate. Its function is as follows. Nucleotidase that shows phosphatase activity on nucleoside 5'-monophosphates. In Neisseria meningitidis serogroup A / serotype 4A (strain DSM 15465 / Z2491), this protein is 5'-nucleotidase SurE.